The chain runs to 62 residues: Cytotoxin homolog (62 aa).

Disulfide bonds link Cys3–Cys22, Cys15–Cys40, Cys44–Cys55, and Cys56–Cys61.

The protein belongs to the three-finger toxin family. Short-chain subfamily. Orphan group XV sub-subfamily. As to expression, expressed by the venom gland.

The protein localises to the secreted. The protein resides in the target cell membrane. Its function is as follows. Has low cytotoxic activity. The sequence is that of Cytotoxin homolog from Naja kaouthia (Monocled cobra).